The chain runs to 336 residues: Cell division protein ZipA (336 aa).

The Periplasmic portion of the chain corresponds to 1 to 2 (ME). Residues 3–23 (LHILFFILAGLLIAVLIGFSL) form a helical membrane-spanning segment. At 24 to 336 (WSARREKSRI…SRQSYLARVS (313 aa)) the chain is on the cytoplasmic side. Residues 57–76 (SLNPQSYAQTTGQHGETEAD) form a disordered region. Residues 59-70 (NPQSYAQTTGQH) show a composition bias toward polar residues.

Belongs to the ZipA family. As to quaternary structure, interacts with FtsZ via their C-terminal domains.

The protein resides in the cell inner membrane. Functionally, essential cell division protein that stabilizes the FtsZ protofilaments by cross-linking them and that serves as a cytoplasmic membrane anchor for the Z ring. Also required for the recruitment to the septal ring of downstream cell division proteins. The sequence is that of Cell division protein ZipA from Actinobacillus pleuropneumoniae serotype 7 (strain AP76).